Consider the following 1238-residue polypeptide: Anion exchange protein 2 (1238 aa).

Residues 1 to 238 form a disordered region; the sequence is MSGTPRRPAS…YNLQERRRIG (238 aa). At 1-704 the chain is on the cytoplasmic side; it reads MSGTPRRPAS…SDFRDALDPQ (704 aa). Basic and acidic residues-rich tracts occupy residues 37–49 and 58–75; these read DLHR…RFEE and GGEE…EYHR. 2 stretches are compositionally biased toward basic residues: residues 76 to 85 and 94 to 110; these read QSSHHIHHPL and RRRK…RRRP. Residues 120–133 show a composition bias toward acidic residues; it reads TIEEGEEDEDETSE. A phosphoserine mark is found at Ser132, Ser144, Ser170, and Ser172. The segment covering 141–154 has biased composition (polar residues); it reads TDPSPASTPTSVQF. Residues 205 to 215 show a composition bias toward gly residues; it reads GTAGGDDGGAS. Ser239 is modified (phosphoserine). Thr253 carries the post-translational modification Phosphothreonine. Lys270 is subject to N6-methyllysine. A disordered region spans residues 277–315; it reads VPGVRRHLVRKNAKGSSQSSREGREPGPTPRTRPRAPHK. The segment covering 280-289 has biased composition (basic residues); the sequence is VRRHLVRKNA. Ser439 is modified (phosphoserine). The segment at 445–466 is disordered; it reads SLLGHHHTQGAESDPHVTEPLI. The next 4 membrane-spanning stretches (helical) occupy residues 705–728, 734–771, 791–813, and 823–844; these read CLAA…GLLG, LIGV…LLVF, VWIG…SFLV, and IFAF…VKIF. The tract at residues 705–1238 is membrane (anion exchange); it reads CLAAVIFIYF…DEYNEMPMPV (534 aa). At 845–897 the chain is on the extracellular side; that stretch reads QEHPLHGCLASNSSEADGGKNTTWTEAAPTPGHGNTSSAEQAGVERPQGQPNT. Asn856, Asn865, and Asn879 each carry an N-linked (GlcNAc...) asparagine glycan. Residues 858–869 show a composition bias toward polar residues; sequence SEADGGKNTTWT. The interval 858-892 is disordered; sequence SEADGGKNTTWTEAAPTPGHGNTSSAEQAGVERPQ. A helical transmembrane segment spans residues 898-915; sequence ALLSLVLMAGTFFIAFFL. The Cytoplasmic portion of the chain corresponds to 916 to 930; that stretch reads RKFKNSRFFPGRIRR. The next 5 helical transmembrane spans lie at 931 to 951, 985 to 1007, 1033 to 1054, 1088 to 1133, and 1160 to 1196; these read VIGD…DYSI, PFPV…LIFM, LLLI…LAAA, VTGL…IQFY, and MHLF…TVPL. Residue Cys1170 is the site of S-palmitoyl cysteine attachment.

The protein belongs to the anion exchanger (TC 2.A.31) family. Expressed in the cochlea (at protein level).

Its subcellular location is the apical cell membrane. The protein resides in the basolateral cell membrane. It catalyses the reaction hydrogencarbonate(in) + chloride(out) = hydrogencarbonate(out) + chloride(in). Functionally, sodium-independent anion exchanger which mediates the electroneutral exchange of chloride for bicarbonate ions across the cell membrane. Plays an important role in osteoclast differentiation and function. Regulates bone resorption and calpain-dependent actin cytoskeleton organization in osteoclasts via anion exchange-dependent control of pH. Essential for intracellular pH regulation in CD8(+) T-cells upon CD3 stimulation, modulating CD8(+) T-cell response. This Cavia porcellus (Guinea pig) protein is Anion exchange protein 2 (SLC4A2).